A 370-amino-acid chain; its full sequence is Small ribosomal subunit biogenesis GTPase RsgA 1 (370 aa).

Residues 97 to 255 form the CP-type G domain; sequence QTQLDRPPIA…LADTPGFNQP (159 aa). Residues 146-149 and 197-205 contribute to the GTP site; these read NKSD and GPSGVGKSS. Zn(2+)-binding residues include cysteine 280, cysteine 285, histidine 287, and cysteine 293. A disordered region spans residues 325-370; it reads PESTLKLKTKGKGQSQYEPKLESKKYRRTSRRTQVQGLQDLYQEEE.

The protein belongs to the TRAFAC class YlqF/YawG GTPase family. RsgA subfamily. In terms of assembly, monomer. Associates with 30S ribosomal subunit, binds 16S rRNA. Zn(2+) serves as cofactor.

It localises to the cytoplasm. Its function is as follows. One of several proteins that assist in the late maturation steps of the functional core of the 30S ribosomal subunit. Helps release RbfA from mature subunits. May play a role in the assembly of ribosomal proteins into the subunit. Circularly permuted GTPase that catalyzes slow GTP hydrolysis, GTPase activity is stimulated by the 30S ribosomal subunit. The protein is Small ribosomal subunit biogenesis GTPase RsgA 1 of Nostoc sp. (strain PCC 7120 / SAG 25.82 / UTEX 2576).